The following is a 612-amino-acid chain: UvrABC system protein C (612 aa).

The GIY-YIG domain maps to 20–98 (THSGVYRMLD…IKQHRPKYNI (79 aa)). Residues 208 to 243 (SSVLEEISANMYQASEDMEYEKAQVYRDQLVVLRKL) enclose the UVR domain.

Belongs to the UvrC family. As to quaternary structure, interacts with UvrB in an incision complex.

The protein resides in the cytoplasm. Functionally, the UvrABC repair system catalyzes the recognition and processing of DNA lesions. UvrC both incises the 5' and 3' sides of the lesion. The N-terminal half is responsible for the 3' incision and the C-terminal half is responsible for the 5' incision. In Francisella tularensis subsp. holarctica (strain LVS), this protein is UvrABC system protein C.